A 213-amino-acid polypeptide reads, in one-letter code: GrpE protein homolog, mitochondrial (213 aa).

Residues 35–55 form a disordered region; that stretch reads STEKQPEEATEQKATESSPEV. Positions 38–55 are enriched in basic and acidic residues; the sequence is KQPEEATEQKATESSPEV.

The protein belongs to the GrpE family. Probable component of the PAM complex at least composed of a mitochondrial HSP70 protein, Roe1, TIM44, blp/TIM16 and TIM14.

It localises to the mitochondrion matrix. Functionally, essential component of the PAM complex, a complex required for the translocation of transit peptide-containing proteins from the inner membrane into the mitochondrial matrix in an ATP-dependent manner. Seems to control the nucleotide-dependent binding of mitochondrial HSP70 to substrate proteins. The chain is GrpE protein homolog, mitochondrial (Roe1) from Drosophila melanogaster (Fruit fly).